The sequence spans 313 residues: MEKRLLDFEVGETVDLFLLIKSSVKGTASNGKPFLSLVLQDKSGELEAKLWDVKESDEANYGVQQIVHLMGDIQNYRGRKQLKIRQIRQATALDGVSASEFMETAPINKEEMADEITQYIFEMKNANLQRITRALLKKYQDDFYDYPAAMRHHHEFVSGLSFHVVSMLRLAKSVADLYPSVNRDLLYAGVILHDLGKVIELSGPVSTTYTLEGNLIGHISIVVEEVSKIADELSIDGEEVVVLKHVLLSHHGKGEWGSPKPPLVREAEILHQIDLMDASLNMMDKVLKHTKPGEFSERVFGLDNRSFYNPIFE.

Residues histidine 163 to serine 279 form the HD domain.

The protein belongs to the YhaM family.

Functionally, shows a 3'-5' exoribonuclease activity. The polypeptide is 3'-5' exoribonuclease YhaM (Listeria monocytogenes serotype 4b (strain CLIP80459)).